The primary structure comprises 589 residues: MFSILNKLGIIWLALANISNCDNSKSGHKSIPKYNVKYYHANIPKDFANRFVELNDKIVENGSFEILGIDGQPSKNQYLCFTPNPNTAVNVSIESAQRNTRSKEIENEPKSEAEIIQRGVEMIEKSFSRKDCVFAYGSNGGYWTLGYCYGDKVVQFHENLQHFVATGKHKPEYPDYIYVLGRFKGSSKKPTNLDNQSPWASNNLDLSEFTIHESSIISDATAKNEQSRFLQHTLYDGEICDLTRKPRSIDIIYKCDPNHRGRIEILDQQEIKTCVYQMVIGVPKLCSLDEFRPNKVEDQIIDIDCKLIDQTNKVKADKLSYQDFFYYTDDIPSDNKIFPIPHSYKVSLNNYNLSPCGHGFYLGQSKLPINSPSVYFNFRHILVFNDQYHSSSDLLEKLGKMLKVCVGNKILSPHIENKRQSLLSWNDTFILWFELYDFYGSFISLVKVSRDGSKEELELKLRLINPETMLDQDGDLVKVPEFDAPNNAWNFQKFSKGKGSALDSTNNDKNNKATAENDKQYQSTSTDIVTVTVTESLETTSSEDGTEEVSNEMVILKKLADKLGMTDINELHQAIEDLDIELEVQHDEL.

The signal sequence occupies residues 1–21 (MFSILNKLGIIWLALANISNC). 3 N-linked (GlcNAc...) asparagine glycosylation sites follow: asparagine 17, asparagine 61, and asparagine 90. Positions 130-288 (KDCVFAYGSN…VIGVPKLCSL (159 aa)) constitute an MRH domain. The cysteines at positions 132 and 148 are disulfide-linked. Positions 143, 155, 241, 247, 270, and 276 each coordinate a mannooligosaccharide derivative. 2 disulfides stabilise this stretch: cysteine 240/cysteine 274 and cysteine 255/cysteine 286. Asparagine 426 carries an N-linked (GlcNAc...) asparagine glycan. The segment at 497-520 (GKGSALDSTNNDKNNKATAENDKQ) is disordered. Residues 509-519 (KNNKATAENDK) show a composition bias toward basic and acidic residues. A Prevents secretion from ER motif is present at residues 586 to 589 (HDEL).

Belongs to the OS-9 family. In terms of assembly, interacts with missfolded ER lumenal proteins.

Its subcellular location is the endoplasmic reticulum membrane. In terms of biological role, lectin involved in the quality control of the secretory pathway. As a member of the endoplasmic reticulum-associated degradation lumenal (ERAD-L) surveillance system, targets misfolded endoplasmic reticulum lumenal glycoproteins for degradation. The chain is Protein OS-9 homolog (YOS9) from Debaryomyces hansenii (strain ATCC 36239 / CBS 767 / BCRC 21394 / JCM 1990 / NBRC 0083 / IGC 2968) (Yeast).